Reading from the N-terminus, the 52-residue chain is UPF0181 protein CGSHiGG_01050 (52 aa).

It belongs to the UPF0181 family.

The polypeptide is UPF0181 protein CGSHiGG_01050 (Haemophilus influenzae (strain PittGG)).